Consider the following 144-residue polypeptide: 3-dehydroquinate dehydratase (144 aa).

Tyrosine 22 serves as the catalytic Proton acceptor. Substrate-binding residues include asparagine 73, histidine 79, and aspartate 86. Catalysis depends on histidine 99, which acts as the Proton donor. Substrate is bound by residues 100-101 (IS) and arginine 110.

Belongs to the type-II 3-dehydroquinase family. As to quaternary structure, homododecamer.

It catalyses the reaction 3-dehydroquinate = 3-dehydroshikimate + H2O. It participates in metabolic intermediate biosynthesis; chorismate biosynthesis; chorismate from D-erythrose 4-phosphate and phosphoenolpyruvate: step 3/7. Functionally, catalyzes a trans-dehydration via an enolate intermediate. The chain is 3-dehydroquinate dehydratase from Clostridium acetobutylicum (strain ATCC 824 / DSM 792 / JCM 1419 / IAM 19013 / LMG 5710 / NBRC 13948 / NRRL B-527 / VKM B-1787 / 2291 / W).